The chain runs to 262 residues: UPF0739 protein C1orf74 homolog (262 aa).

This sequence belongs to the UPF0739 family.

The polypeptide is UPF0739 protein C1orf74 homolog (Xenopus laevis (African clawed frog)).